The chain runs to 115 residues: MLDDNSQDISIPEAVVVLCTAPDEATAQDLAAKVLAEKLAACATLLPGATSLYYWEGKLEQEYEVQMILKTTVSHQQALLECLKSHHPYQTPELLVLPVTHGDTDYLSWLNASLR.

Residues Cys19, His86, and His87 each coordinate Cu cation.

Belongs to the CutA family. As to quaternary structure, homotrimer. Cu cation serves as cofactor.

It is found in the cytoplasm. Involved in resistance toward heavy metals. This is Divalent-cation tolerance protein CutA from Citrobacter koseri (strain ATCC BAA-895 / CDC 4225-83 / SGSC4696).